The primary structure comprises 786 residues: Endonuclease MutS2 (786 aa).

332–339 serves as a coordination point for ATP; that stretch reads GPNTGGKT. One can recognise a Smr domain in the interval 711–786; sequence IDLRGMDSEE…GTGVTVVILK (76 aa).

This sequence belongs to the DNA mismatch repair MutS family. MutS2 subfamily. Homodimer. Binds to stalled ribosomes, contacting rRNA.

Endonuclease that is involved in the suppression of homologous recombination and thus may have a key role in the control of bacterial genetic diversity. Its function is as follows. Acts as a ribosome collision sensor, splitting the ribosome into its 2 subunits. Detects stalled/collided 70S ribosomes which it binds and splits by an ATP-hydrolysis driven conformational change. Acts upstream of the ribosome quality control system (RQC), a ribosome-associated complex that mediates the extraction of incompletely synthesized nascent chains from stalled ribosomes and their subsequent degradation. Probably generates substrates for RQC. The chain is Endonuclease MutS2 from Clostridium perfringens (strain SM101 / Type A).